The chain runs to 727 residues: Tubulin polyglutamylase TTLL11 (727 aa).

The span at 1-12 (MRRSSPEKKPEA) shows a compositional bias: basic and acidic residues. Positions 1–88 (MRRSSPEKKP…ARVVRRLPPA (88 aa)) are disordered. Residues 17 to 34 (DAAAAAAATAAATESLPA) are compositionally biased toward low complexity. Basic and acidic residues-rich tracts occupy residues 49–63 (DPER…KDVG) and 72–81 (HAPEEGEARV). One can recognise a TTL domain in the interval 125 to 477 (PVTVDSSKAR…EVKVAVIRDT (353 aa)). Residues K246, 252–253 (QG), 279–282 (QEYI), and 292–294 (KFD) contribute to the ATP site. Q252 is an a protein binding site. An L-glutamate-binding site is contributed by R318. 340–341 (TN) serves as a coordination point for ATP. Y342, S343, and K362 together coordinate L-glutamate. Mg(2+) contacts are provided by D425, E438, and N440. The segment at 464–566 (LVDEEVKVAV…SICLKQVFPK (103 aa)) is c-MTBD region. K470 contacts L-glutamate. 2 disordered regions span residues 530–551 (KSFT…EPNP) and 694–727 (RPLQ…LSQS).

This sequence belongs to the tubulin--tyrosine ligase family. The cofactor is Mg(2+). In terms of tissue distribution, highly expressed in brain, kidney, liver, lung, muscle and testis. Expressed in heart, spleen and trachea. In the brain, expressed in ependymal cilia, cortex, corpus callosum and striatum.

It is found in the cytoplasm. It localises to the cytoskeleton. Its subcellular location is the cilium basal body. The enzyme catalyses L-glutamyl-[protein] + L-glutamate + ATP = gamma-L-glutamyl-L-glutamyl-[protein] + ADP + phosphate + H(+). The catalysed reaction is (L-glutamyl)(n)-gamma-L-glutamyl-L-glutamyl-[protein] + L-glutamate + ATP = (L-glutamyl)(n+1)-gamma-L-glutamyl-L-glutamyl-[protein] + ADP + phosphate + H(+). Polyglutamylase which modifies tubulin, generating polyglutamate side chains of variable lengths on the gamma-carboxyl group of specific glutamate residues within the C-terminal tail of tubulin. Preferentially mediates ATP-dependent polyglutamate long side-chain elongation over the initiation step of the polyglutamylation reaction. Preferentially modifies the alpha-tubulin tail over a beta-tail. Required for CCSAP localization to both spindle and cilia microtubules. Promotes tubulin polyglutamylation which stimulates spastin/SPAST-mediated microtubule severing, thereby regulating microtubule functions. This is Tubulin polyglutamylase TTLL11 from Mus musculus (Mouse).